We begin with the raw amino-acid sequence, 307 residues long: Nitrogenase iron protein 2 (307 aa).

13 to 20 is a binding site for ATP; that stretch reads GKGGIGKS. [4Fe-4S] cluster is bound at residue C101. At R104 the chain carries ADP-ribosylarginine; by dinitrogenase reductase ADP-ribosyltransferase. Position 135 (C135) interacts with [4Fe-4S] cluster. A disordered region spans residues 285–307; it reads QLTETDKAAKESEKKQEDAEGEA.

It belongs to the NifH/BchL/ChlL family. Homodimer. [4Fe-4S] cluster is required as a cofactor. In terms of processing, the reversible ADP-ribosylation of Arg-104 inactivates the nitrogenase reductase and regulates nitrogenase activity.

The enzyme catalyses N2 + 8 reduced [2Fe-2S]-[ferredoxin] + 16 ATP + 16 H2O = H2 + 8 oxidized [2Fe-2S]-[ferredoxin] + 2 NH4(+) + 16 ADP + 16 phosphate + 6 H(+). Its function is as follows. The key enzymatic reactions in nitrogen fixation are catalyzed by the nitrogenase complex, which has 2 components: the iron protein and the molybdenum-iron protein. This Mastigocladus laminosus (Fischerella sp.) protein is Nitrogenase iron protein 2 (nifH2).